The chain runs to 1572 residues: Dynein axonemal assembly factor 8 (1572 aa).

Disordered regions lie at residues 1–21 (MASE…NWSG), 262–304 (SEEV…HPQS), 324–428 (SLEQ…EILQ), and 849–871 (FQNP…SDSE). Polar residues predominate over residues 324-335 (SLEQNPENPSQR). The span at 336–351 (NEQKEKHHLNKTDHTG) shows a compositional bias: basic and acidic residues. The span at 361-374 (NIQNDSLSDANMSN) shows a compositional bias: polar residues. Residues 409–426 (VGREEKDGREEQEKEKEI) are compositionally biased toward basic and acidic residues. The segment covering 849–865 (FQNPYSRSTQPRSANLR) has biased composition (polar residues). The NDK stretch occupies residues 1249–1382 (TVLLLKPRIW…IRDIKTFFPE (134 aa)).

As to quaternary structure, interacts with DNAI2. As to expression, expression is enriched in multiciliated cells in the epidermis and the nephrostomes of the pronephros.

The protein resides in the dynein axonemal particle. Its subcellular location is the cytoplasm. Its function is as follows. In cyliated cells, dynein axonemal particle-specific protein required for deployment of ODA to the axoneme. Interacts with outer dynein arm (ODA) subunits. This chain is Dynein axonemal assembly factor 8 (dnaaf8), found in Xenopus laevis (African clawed frog).